A 619-amino-acid polypeptide reads, in one-letter code: Phosphomethylpyrimidine synthase (619 aa).

Residues 93-104 (IKPEDNGLKGPD) are compositionally biased toward basic and acidic residues. A disordered region spans residues 93–114 (IKPEDNGLKGPDRSGGVTPFPN). Substrate is bound by residues asparagine 217, methionine 246, tyrosine 275, histidine 311, 331–333 (SRG), 372–375 (DGLR), and glutamate 411. A Zn(2+)-binding site is contributed by histidine 415. Tyrosine 438 is a binding site for substrate. Histidine 479 lines the Zn(2+) pocket. [4Fe-4S] cluster contacts are provided by cysteine 559, cysteine 562, and cysteine 567.

It belongs to the ThiC family. Homodimer. Requires [4Fe-4S] cluster as cofactor.

It catalyses the reaction 5-amino-1-(5-phospho-beta-D-ribosyl)imidazole + S-adenosyl-L-methionine = 4-amino-2-methyl-5-(phosphooxymethyl)pyrimidine + CO + 5'-deoxyadenosine + formate + L-methionine + 3 H(+). It functions in the pathway cofactor biosynthesis; thiamine diphosphate biosynthesis. In terms of biological role, catalyzes the synthesis of the hydroxymethylpyrimidine phosphate (HMP-P) moiety of thiamine from aminoimidazole ribotide (AIR) in a radical S-adenosyl-L-methionine (SAM)-dependent reaction. In Rhizorhabdus wittichii (strain DSM 6014 / CCUG 31198 / JCM 15750 / NBRC 105917 / EY 4224 / RW1) (Sphingomonas wittichii), this protein is Phosphomethylpyrimidine synthase.